Here is a 40-residue protein sequence, read N- to C-terminus: MNDTTGRIPLWIIGTVTGIFGIGLIGIFFYGSYSGLGSSL.

A helical membrane pass occupies residues 8–28 (IPLWIIGTVTGIFGIGLIGIF).

Belongs to the PsbJ family. In terms of assembly, PSII is composed of 1 copy each of membrane proteins PsbA, PsbB, PsbC, PsbD, PsbE, PsbF, PsbH, PsbI, PsbJ, PsbK, PsbL, PsbM, PsbT, PsbX, PsbY, PsbZ, Psb30/Ycf12, at least 3 peripheral proteins of the oxygen-evolving complex and a large number of cofactors. It forms dimeric complexes.

Its subcellular location is the plastid membrane. One of the components of the core complex of photosystem II (PSII). PSII is a light-driven water:plastoquinone oxidoreductase that uses light energy to abstract electrons from H(2)O, generating O(2) and a proton gradient subsequently used for ATP formation. It consists of a core antenna complex that captures photons, and an electron transfer chain that converts photonic excitation into a charge separation. This chain is Photosystem II reaction center protein J, found in Cuscuta reflexa (Southern Asian dodder).